Here is a 450-residue protein sequence, read N- to C-terminus: NAD-specific glutamate dehydrogenase (450 aa).

Residues K90, Q111, and K114 each coordinate substrate. Catalysis depends on K126, which acts as the Proton donor. Substrate is bound at residue G165. NAD(+) is bound by residues T210 and N241. S381 lines the substrate pocket.

The protein belongs to the Glu/Leu/Phe/Val dehydrogenases family. Homohexamer.

It carries out the reaction L-glutamate + NAD(+) + H2O = 2-oxoglutarate + NH4(+) + NADH + H(+). It functions in the pathway amino-acid degradation; L-glutamate degradation via hydroxyglutarate pathway; crotonoyl-CoA from L-glutamate: step 1/5. In Clostridium symbiosum (Bacteroides symbiosus), this protein is NAD-specific glutamate dehydrogenase (gdh).